The chain runs to 393 residues: Formate-dependent phosphoribosylglycinamide formyltransferase (393 aa).

N(1)-(5-phospho-beta-D-ribosyl)glycinamide is bound by residues 22-23 and E82; that span reads EL. ATP is bound by residues R114, K155, 160 to 165, 195 to 198, and E203; these read SSGKGQ and EGFI. An ATP-grasp domain is found at 119–308; the sequence is RLAAEELGLP…EFALHARAIL (190 aa). Residues E267 and E279 each contribute to the Mg(2+) site. Residues D286, K356, and 363 to 364 each bind N(1)-(5-phospho-beta-D-ribosyl)glycinamide; that span reads RR.

Belongs to the PurK/PurT family. As to quaternary structure, homodimer.

The enzyme catalyses N(1)-(5-phospho-beta-D-ribosyl)glycinamide + formate + ATP = N(2)-formyl-N(1)-(5-phospho-beta-D-ribosyl)glycinamide + ADP + phosphate + H(+). It functions in the pathway purine metabolism; IMP biosynthesis via de novo pathway; N(2)-formyl-N(1)-(5-phospho-D-ribosyl)glycinamide from N(1)-(5-phospho-D-ribosyl)glycinamide (formate route): step 1/1. Its function is as follows. Involved in the de novo purine biosynthesis. Catalyzes the transfer of formate to 5-phospho-ribosyl-glycinamide (GAR), producing 5-phospho-ribosyl-N-formylglycinamide (FGAR). Formate is provided by PurU via hydrolysis of 10-formyl-tetrahydrofolate. The sequence is that of Formate-dependent phosphoribosylglycinamide formyltransferase from Pseudomonas aeruginosa (strain LESB58).